Consider the following 116-residue polypeptide: MLSCRLQCALAALSIVLALGCVTGAPSDPRLRQFLQKSLAAAAGKQELAKYFLAELLSEPNQTENDALEPEDLSQAAEQDEMRLELQRSANSNPAMAPRERKAGCKNFFWKTFTSC.

The first 24 residues, 1 to 24 (MLSCRLQCALAALSIVLALGCVTG), serve as a signal peptide directing secretion. The propeptide occupies 25–88 (APSDPRLRQF…QDEMRLELQR (64 aa)). Alanine amide is present on alanine 43. The tract at residues 62 to 82 (QTENDALEPEDLSQAAEQDEM) is disordered. Cysteines 105 and 116 form a disulfide.

It belongs to the somatostatin family. C-terminal amidation of the neuronostatin peptide is required for its biological activity, including for the regulation of mean arterial pressure.

Its subcellular location is the secreted. Inhibits the secretion of pituitary hormones, including that of growth hormone/somatotropin (GH1), PRL, ACTH, luteinizing hormone (LH) and TSH. Also impairs ghrelin- and GnRH-stimulated secretion of GH1 and LH; the inhibition of ghrelin-stimulated secretion of GH1 can be further increased by neuronostatin. Functionally, may enhance low-glucose-induced glucagon release by pancreatic alpha cells. This effect may be mediated by binding to GPR107 and PKA activation. May regulate cardiac contractile function. May compromise cardiomyocyte viability. In the central nervous system, may impair memory retention and may affect hippocampal excitability. May also have anxiolytic and anorexigenic effects. May play a role in arterial pressure regulation. May inhibit basal, but not ghrelin- or GnRH-stimulated secretion of GH1 or LH, but does not affect the release of other pituitary hormones, including PRL, ACTH, FSH or TSH. Potentiates inhibitory action of somatostatin on ghrelin-stimulated secretion of GH1, but not that on GnRH-stimulated secretion of LH. In Homo sapiens (Human), this protein is Somatostatin (SST).